The primary structure comprises 99 residues: Nucleoid-associated protein EbfC (99 aa).

It belongs to the YbaB/EbfC family. In terms of assembly, homodimer.

Its subcellular location is the cytoplasm. The protein resides in the nucleoid. Binds to DNA and alters its conformation. May be involved in regulation of gene expression, nucleoid organization and DNA protection. The sequence is that of Nucleoid-associated protein EbfC from Borrelia turicatae (strain 91E135).